The following is a 459-amino-acid chain: Vitronectin (459 aa).

An N-terminal signal peptide occupies residues 1–19 (MAPLRPLLMLALLAWVALA). The region spanning 20–63 (DQESCKGRCTDGFIAERKCQCDELCSYYQSCCTDYVAECKPQVT) is the SMB domain. Disulfide bonds link C24-C28, C24-C40, C28-C58, C38-C40, C38-C51, C44-C50, and C51-C58. Residues 64-66 (RGD) carry the Cell attachment site motif. Sulfotyrosine occurs at positions 75, 78, and 80. N87 and N146 each carry an N-linked (GlcNAc...) asparagine glycan. 3 Hemopexin repeats span residues 135–179 (GKPF…VWGI), 180–227 (KGPI…FKGI), and 228–285 (PDDV…FALM). 2 positions are modified to phosphoserine: S289 and S378. Residues 338 to 380 (LKPSQPKMTKSARRSGKRYRSRRGRGRGRGHSRSQKSHRQSRS) form a disordered region. Basic residues predominate over residues 347-378 (KSARRSGKRYRSRRGRGRGRGHSRSQKSHRQS). Residues Y398 and Y401 each carry the sulfotyrosine modification. The stretch at 400-453 (DYKMDWLVPATCEPIQSVYFFSGEEYYRVNLRTQRVDTVTPPYPRSIAQYWLGC) is one Hemopexin 4 repeat.

Monomer. Interacts with SERPINE1/PAI1 and C1QBP. Post-translationally, sulfated on tyrosine residues. N- and O-glycosylated. In terms of processing, it has been suggested that the active SMB domain may be permitted considerable disulfide bond heterogeneity or variability, thus two alternate disulfide patterns based on 3D structures are described with 1 disulfide bond conserved in both. In terms of tissue distribution, plasma.

Its subcellular location is the secreted. The protein resides in the extracellular space. Its function is as follows. Vitronectin is a cell adhesion and spreading factor found in serum and tissues. Vitronectin interact with glycosaminoglycans and proteoglycans. Is recognized by certain members of the integrin family and serves as a cell-to-substrate adhesion molecule. Inhibitor of the membrane-damaging effect of the terminal cytolytic complement pathway. The protein is Vitronectin (VTN) of Sus scrofa (Pig).